The chain runs to 584 residues: MASLSSQSKLLATPYSFPYHTKPSRVSLRRVSCKASNDNKDKPNDQEKTFSIDRRNMLIGLGGLYGASNVFPSNQSTLAAPIQPPVLPDSCHPPEDLAEGVNVLCCPPDVKDPIDFQMPSNPSRLRIRPAAHLADPTYIEKYKKALAAMKALPQNDPRSFYQQANIHCAYCNGAYDQVGFPDVNIQVHHSWLFLPFHRWYLYFYERILGSLIDDPTFAIPFWNWDAPKGMHMPHMFIDPNSPLYDAKRNPAHFPDTIVDLDFSSGEAPSHNPRQIGNNLSIMYKQVVRAKKARLFHGRPLQAGSFPDESGDGSLEGTPHGNIHLWSGDPRQSNFENMGNFYSAGRDPLFYAHHANVDRMWYIWKNSLGRKDYKKKDWLNAGFLLFDENAQPVRVYVRDALDERKLGYAYQEVDIPWINSKPKPRKANPWPNRLRSKATTTTKLINKFPLTLDSTVSFEVKRPKKSRSKSEKEDEEEVLVIEKIKHEPQFPLKFDVYINDEDEDPSAADQTEFAGSFVNVPHFHRHGDKKDKRQTTNLSIGISEVLDELDVDGDDSIVVTLVPRVGSGQITIGGAKIEFVRDEED.

The N-terminal 32 residues, 1–32 (MASLSSQSKLLATPYSFPYHTKPSRVSLRRVS), are a transit peptide targeting the chloroplast. Residues 33–79 (CKASNDNKDKPNDQEKTFSIDRRNMLIGLGGLYGASNVFPSNQSTLA) constitute a thylakoid transit peptide. 2 disulfide bridges follow: Cys91/Cys106 and Cys105/Cys168. Residues His167, His188, His197, His319, His323, and His353 each coordinate Cu cation. The 2'-(S-cysteinyl)-histidine (Cys-His) cross-link spans 171 to 188 (CNGAYDQVGFPDVNIQVH). Positions 432–584 (RLRSKATTTT…KIEFVRDEED (153 aa)) are cleaved as a propeptide — removed in mature form.

This sequence belongs to the tyrosinase family. It depends on Cu(2+) as a cofactor.

It localises to the plastid. It is found in the chloroplast thylakoid lumen. The catalysed reaction is (+)-larreatricin + AH2 + O2 = (+)-3'-hydroxylarreatricin + A + H2O. Its function is as follows. Enantio-specific polyphenol oxidase involved in aromatic ring hydroxylation. Involved in the biosynthesis of the creosote bush 8-8' linked lignans. Has a strong preference for the 3' position of (+)-larreatricin. The polypeptide is (+)-larreatricin hydroxylase, chloroplastic (Larrea tridentata (Creosote bush)).